A 364-amino-acid chain; its full sequence is Programmed cell death protein 2-like (364 aa).

Ala2 is subject to N-acetylalanine. Residues 125–150 (EGSQDWGSDTEETPPPPASDLGSDSN) form a disordered region.

Functionally, over-expression suppresses AP1, CREB, NFAT, and NF-kB transcriptional activation, and delays cell cycle progression at S phase. The polypeptide is Programmed cell death protein 2-like (Pdcd2l) (Mus musculus (Mouse)).